Consider the following 179-residue polypeptide: Acireductone dioxygenase (179 aa).

Residues His100, His102, Glu106, and His145 each contribute to the Fe(2+) site. Ni(2+)-binding residues include His100, His102, Glu106, and His145.

This sequence belongs to the acireductone dioxygenase (ARD) family. Monomer. It depends on Fe(2+) as a cofactor. Requires Ni(2+) as cofactor.

It catalyses the reaction 1,2-dihydroxy-5-(methylsulfanyl)pent-1-en-3-one + O2 = 3-(methylsulfanyl)propanoate + CO + formate + 2 H(+). The catalysed reaction is 1,2-dihydroxy-5-(methylsulfanyl)pent-1-en-3-one + O2 = 4-methylsulfanyl-2-oxobutanoate + formate + 2 H(+). It functions in the pathway amino-acid biosynthesis; L-methionine biosynthesis via salvage pathway; L-methionine from S-methyl-5-thio-alpha-D-ribose 1-phosphate: step 5/6. Catalyzes 2 different reactions between oxygen and the acireductone 1,2-dihydroxy-3-keto-5-methylthiopentene (DHK-MTPene) depending upon the metal bound in the active site. Fe-containing acireductone dioxygenase (Fe-ARD) produces formate and 2-keto-4-methylthiobutyrate (KMTB), the alpha-ketoacid precursor of methionine in the methionine recycle pathway. Ni-containing acireductone dioxygenase (Ni-ARD) produces methylthiopropionate, carbon monoxide and formate, and does not lie on the methionine recycle pathway. The chain is Acireductone dioxygenase from Bacillus licheniformis (strain ATCC 14580 / DSM 13 / JCM 2505 / CCUG 7422 / NBRC 12200 / NCIMB 9375 / NCTC 10341 / NRRL NRS-1264 / Gibson 46).